A 704-amino-acid chain; its full sequence is Elongation factor G (704 aa).

The tr-type G domain occupies 8 to 290 (EKYRNIGICA…GVVRYLPAPN (283 aa)). GTP contacts are provided by residues 17 to 24 (AHVDAGKT), 88 to 92 (DTPGH), and 142 to 145 (NKMD).

The protein belongs to the TRAFAC class translation factor GTPase superfamily. Classic translation factor GTPase family. EF-G/EF-2 subfamily.

It localises to the cytoplasm. Catalyzes the GTP-dependent ribosomal translocation step during translation elongation. During this step, the ribosome changes from the pre-translocational (PRE) to the post-translocational (POST) state as the newly formed A-site-bound peptidyl-tRNA and P-site-bound deacylated tRNA move to the P and E sites, respectively. Catalyzes the coordinated movement of the two tRNA molecules, the mRNA and conformational changes in the ribosome. In Francisella tularensis subsp. mediasiatica (strain FSC147), this protein is Elongation factor G.